The following is a 622-amino-acid chain: Membrane protein insertase YidC (622 aa).

Residues 6–26 traverse the membrane as a helical segment; it reads IVLLIIFSTSLLFLWDAWVKE. The tract at residues 47–87 is disordered; sequence TQSKNNDGLPIPGSELTASQTGSDLNGIPSSGDTADSVTPR. Polar residues predominate over residues 62-83; the sequence is LTASQTGSDLNGIPSSGDTADS. A run of 3 helical transmembrane segments spans residues 381-401, 451-471, and 525-545; these read WGIA…PLSA, FPIL…LAAV, and PVAF…YSLV. The segment at 563 to 622 is disordered; that stretch reads TAPSQDAPESPASKDAPELPVSNQVINDSENTEAPASGPADSPKKPVNIPRRMHKRTRKK. Residues 583–596 are compositionally biased toward polar residues; that stretch reads VSNQVINDSENTEA. Basic residues predominate over residues 613 to 622; the sequence is RRMHKRTRKK.

The protein belongs to the OXA1/ALB3/YidC family. Type 1 subfamily. Interacts with the Sec translocase complex via SecD. Specifically interacts with transmembrane segments of nascent integral membrane proteins during membrane integration.

It is found in the cell inner membrane. Required for the insertion and/or proper folding and/or complex formation of integral membrane proteins into the membrane. Involved in integration of membrane proteins that insert both dependently and independently of the Sec translocase complex, as well as at least some lipoproteins. Aids folding of multispanning membrane proteins. This is Membrane protein insertase YidC from Nitrosomonas eutropha (strain DSM 101675 / C91 / Nm57).